The following is a 159-amino-acid chain: Transcription elongation factor A protein-like 1 (159 aa).

The tract at residues 1-97 (MDKPRKENEE…PPCGVGKHKL (97 aa)) is disordered. A compositionally biased stretch (basic and acidic residues) spans 17-34 (KTDEERPPVEHSPEKQSP). 6 positions are modified to phosphoserine: serine 28, serine 33, serine 38, serine 39, serine 43, and serine 44. Residues 37–54 (QSSEEQSSEEEFFPEELL) are compositionally biased toward acidic residues. Basic and acidic residues predominate over residues 64–80 (SEERPPQEGLSRKDLFE).

The protein belongs to the TFS-II family. TFA subfamily. Post-translationally, phosphorylation of Ser-38 and Ser-39 is critical for transcriptional repression. In terms of tissue distribution, expressed in all tissues examined. Highly expressed in heart, ovary, prostate and skeletal muscle. Moderately expressed in brain, placenta, testis and small intestine. Weakly expressed in lung, liver and spleen. Expressed in several cancer cell lines.

The protein resides in the nucleus. Functionally, may be involved in transcriptional regulation. Modulates various viral and cellular promoters in a promoter context-dependent manner. For example, transcription from the FOS promoter is increased, while Rous sarcoma virus (RSV) long terminal repeat (LTR) promoter activity is repressed. Does not bind DNA directly. This chain is Transcription elongation factor A protein-like 1, found in Homo sapiens (Human).